Reading from the N-terminus, the 102-residue chain is MYAVIRTGGKQYKVSEGDFLKVEKLEGAVGDTVELKDVLMVGGETVAIGTPLVPSASVVGRIVDQGKDKKILVFKSKRRKNFRKMYGHRQPRTVLKIEKINA.

The protein belongs to the bacterial ribosomal protein bL21 family. As to quaternary structure, part of the 50S ribosomal subunit. Contacts protein L20.

Functionally, this protein binds to 23S rRNA in the presence of protein L20. The sequence is that of Large ribosomal subunit protein bL21 from Geobacter sulfurreducens (strain ATCC 51573 / DSM 12127 / PCA).